We begin with the raw amino-acid sequence, 654 residues long: Macrolide export ATP-binding/permease protein MacB (654 aa).

In terms of domain architecture, ABC transporter spans 6–244 (IEISALNRIF…TSASSATDAA (239 aa)). 42–49 (GTSGSGKS) contacts ATP. 4 helical membrane passes run 279 to 299 (LLTM…VAIG), 534 to 554 (IAVI…LVSV), 584 to 604 (MVCL…GALF), and 617 to 637 (VTAI…FGFL).

This sequence belongs to the ABC transporter superfamily. Macrolide exporter (TC 3.A.1.122) family. As to quaternary structure, homodimer. Part of the tripartite efflux system MacAB-TolC, which is composed of an inner membrane transporter, MacB, a periplasmic membrane fusion protein, MacA, and an outer membrane component, TolC. The complex forms a large protein conduit and can translocate molecules across both the inner and outer membranes. Interacts with MacA.

It is found in the cell inner membrane. Its function is as follows. Part of the tripartite efflux system MacAB-TolC. MacB is a non-canonical ABC transporter that contains transmembrane domains (TMD), which form a pore in the inner membrane, and an ATP-binding domain (NBD), which is responsible for energy generation. Confers resistance against macrolides. This chain is Macrolide export ATP-binding/permease protein MacB, found in Hahella chejuensis (strain KCTC 2396).